We begin with the raw amino-acid sequence, 377 residues long: MAAAAQSRVVRVLSMSRSAITAIATSVCHGPPCRQLHHALMPHGKGGRSSVSGIVATVFGATGFLGRYVVNHLGRMGSQVIIPYRCDKYDIMHLRPMGDLGQLLFLEWDARDKDSIRRVVQHSNVVINLIGRDWETKNYDFEDVFVKIPQAIAQLSKEAGVEKFIHVSHLNANIKSSSRYLRNKAVGEKVVRDAFPEAIIIKPSDIFGREDRFLNSFASMHRFGPIPLGSLGWKTVKQPVYVVDVSKGIVNAVKDPDANGKSFAFVGPSRYLLFHLVKYIFAVAHRLFLPFPLPLFAYRWVARVFEISPFEPWITRDKVERMHITDMKLPHLPGLEDLGIQATPLELKAIEVLRRHRTYRWLSAEIEDVKPAKTVNI.

The N-terminal 35 residues, 1-35 (MAAAAQSRVVRVLSMSRSAITAIATSVCHGPPCRQ), are a transit peptide targeting the mitochondrion. N6-succinyllysine is present on lysine 175. An N6-acetyllysine mark is found at lysine 189 and lysine 370.

The protein belongs to the complex I NDUFA9 subunit family. As to quaternary structure, complex I is composed of 45 different subunits. This a component of the hydrophobic protein fraction. Interacts with BLOC1S1. Interacts with SLC2A4. Interacts with CLOCK. Interacts with RAB5IF. FAD serves as cofactor. Acetylated on lysine residues. BLOC1S1 is required for acetylation. Acetylated by CLOCK in a circadian manner.

It localises to the mitochondrion matrix. Functionally, accessory subunit of the mitochondrial membrane respiratory chain NADH dehydrogenase (Complex I), that is believed not to be involved in catalysis. Complex I functions in the transfer of electrons from NADH to the respiratory chain. The immediate electron acceptor for the enzyme is believed to be ubiquinone. This chain is NADH dehydrogenase [ubiquinone] 1 alpha subcomplex subunit 9, mitochondrial (NDUFA9), found in Pan troglodytes (Chimpanzee).